The primary structure comprises 301 residues: tRNA pseudouridine synthase B (301 aa).

The active-site Nucleophile is the aspartate 47.

The protein belongs to the pseudouridine synthase TruB family. Type 1 subfamily.

It carries out the reaction uridine(55) in tRNA = pseudouridine(55) in tRNA. Responsible for synthesis of pseudouridine from uracil-55 in the psi GC loop of transfer RNAs. This Cereibacter sphaeroides (strain ATCC 17023 / DSM 158 / JCM 6121 / CCUG 31486 / LMG 2827 / NBRC 12203 / NCIMB 8253 / ATH 2.4.1.) (Rhodobacter sphaeroides) protein is tRNA pseudouridine synthase B.